A 408-amino-acid chain; its full sequence is MDVVPCLKVPQRHAQMYRKYLESQGVLDRRYGAEKHSDGTVTLLVVASALPQLDLVALKEHVAHDSFCEIVDIQAQLSKKSKVKSVHMKLVEAARSFLLSKGKEWSEDLGRDIPGRWQCHGDLVLFTEGCFSNAVWKEIGSEFWTAVALTLGVKRIAQIKKISQDGYRTPIVTMLLGDSSHVTHIDNHIRYEFDVTKCMFSSGNITEKLRIASFDCSGETVVDLYAGIGYFTLPYLVHANAAHVHACEWNPDAVAALQRNLEINGVSNRCTVHQGDNRQLSLSDLADRVNLGLIPSSEEGWPVACRLLKRSTGGIMHIHQNVTAPFHHEPSELNSSVEGSSVEVSPLRIQKDMQVWTAWASETAKRICTLLLGITGSEWKTNIRHIEHVKTYAPHISHVVLDLECKPL.

S-adenosyl-L-methionine contacts are provided by residues Ser-201, Lys-208, Glu-248, and 276–277; that span reads DN.

The protein belongs to the class I-like SAM-binding methyltransferase superfamily. TRM5/TYW2 family.

It catalyses the reaction 4-demethylwyosine(37) in tRNA(Phe) + S-adenosyl-L-methionine = 4-demethyl-7-[(3S)-3-amino-3-carboxypropyl]wyosine(37) in tRNA(Phe) + S-methyl-5'-thioadenosine + H(+). It participates in tRNA modification; wybutosine-tRNA(Phe) biosynthesis. In terms of biological role, S-adenosyl-L-methionine-dependent transferase that acts as a component of the wybutosine biosynthesis pathway. Wybutosine is a hyper modified guanosine with a tricyclic base found at the 3'-position adjacent to the anticodon of eukaryotic phenylalanine tRNA. Catalyzes the transfer of the alpha-amino-alpha-carboxypropyl (acp) group from S-adenosyl-L-methionine to the C-7 position of 4-demethylwyosine (imG-14) to produce wybutosine-86. This is tRNA wybutosine-synthesizing protein 2 homolog (trmt12) from Danio rerio (Zebrafish).